We begin with the raw amino-acid sequence, 504 residues long: MGLCYSVDRTTGKEPGEASSTATTAETVEERSGSGRWRRPRDLKGGGDIEGIPQVLGRLVSNGSSKIACLYTQQGKKGTNQDAMLVFENFCSRDDTVFCGVFDGHGPFGHMVAKKVRDTLPFTLLTQLKMTSESDQSSLVGANGFQIKCTEEEEVQTTESEQVQKTESVTTMDEQWCELNPNVNNDELPEMYLPLKHAMLKSCQQIDKELKMHPTIDCFCSGTTSVTLIKQGEDLVVGNIGDSRAVLATRDEDNALLAVQLTIDLKPDLPGESARIQKCKGRVFALQDEPEVARVWLPNSDSPGLAMARAFGDFCLKDYGLISVPDINYRRLTERDQFIILASDGVWDVLSNKEAVDIVASAPSRSTAARALVDTAVRSWRIKYPTSKNDDCTVVCLFLQDSSVAMEVSTNVKKDSPKEESIESVTNSTSKEEDEIVPVKDEKIPESCGIESKMMTMTLAECISVAQDDEEWSALEGLTRVNSLLSIPRFLSGELRSTSWRKWL.

The segment at 1–49 (MGLCYSVDRTTGKEPGEASSTATTAETVEERSGSGRWRRPRDLKGGGDI) is disordered. The segment covering 17–26 (EASSTATTAE) has biased composition (low complexity). In terms of domain architecture, PPM-type phosphatase spans 67-399 (IACLYTQQGK…DDCTVVCLFL (333 aa)). Residues D103, G104, D344, and D390 each contribute to the Mn(2+) site. Positions 410–435 (TNVKKDSPKEESIESVTNSTSKEEDE) are disordered. Residues 412–421 (VKKDSPKEES) are compositionally biased toward basic and acidic residues.

The protein belongs to the PP2C family. It depends on Mg(2+) as a cofactor. Mn(2+) serves as cofactor.

The enzyme catalyses O-phospho-L-seryl-[protein] + H2O = L-seryl-[protein] + phosphate. It catalyses the reaction O-phospho-L-threonyl-[protein] + H2O = L-threonyl-[protein] + phosphate. This Arabidopsis thaliana (Mouse-ear cress) protein is Probable protein phosphatase 2C 18.